A 333-amino-acid chain; its full sequence is Ribosomal RNA small subunit methyltransferase C (333 aa).

It belongs to the methyltransferase superfamily. RsmC family. As to quaternary structure, monomer.

Its subcellular location is the cytoplasm. The catalysed reaction is guanosine(1207) in 16S rRNA + S-adenosyl-L-methionine = N(2)-methylguanosine(1207) in 16S rRNA + S-adenosyl-L-homocysteine + H(+). In terms of biological role, specifically methylates the guanine in position 1207 of 16S rRNA in the 30S particle. The sequence is that of Ribosomal RNA small subunit methyltransferase C from Actinobacillus succinogenes (strain ATCC 55618 / DSM 22257 / CCUG 43843 / 130Z).